The chain runs to 204 residues: Small ribosomal subunit protein uS4 (204 aa).

In terms of domain architecture, S4 RNA-binding spans 92 to 157 (RRLDALVLRS…KPLFEVAREG (66 aa)).

Belongs to the universal ribosomal protein uS4 family. Part of the 30S ribosomal subunit. Contacts protein S5. The interaction surface between S4 and S5 is involved in control of translational fidelity.

Functionally, one of the primary rRNA binding proteins, it binds directly to 16S rRNA where it nucleates assembly of the body of the 30S subunit. In terms of biological role, with S5 and S12 plays an important role in translational accuracy. In Streptomyces avermitilis (strain ATCC 31267 / DSM 46492 / JCM 5070 / NBRC 14893 / NCIMB 12804 / NRRL 8165 / MA-4680), this protein is Small ribosomal subunit protein uS4.